The following is a 1128-amino-acid chain: DNA-directed RNA polymerase subunit Rpo2 (1128 aa).

DsDNA contacts are provided by residues lysine 178, 181-182 (SN), lysine 206, 435-439 (RGQPN), and 1027-1032 (RFGEME). Residues cysteine 1061, cysteine 1064, cysteine 1079, and histidine 1082 each contribute to the Zn(2+) site.

It belongs to the RNA polymerase beta chain family. In terms of assembly, part of the 13-subunit RNA polymerase complex. Requires Zn(2+) as cofactor.

The protein resides in the cytoplasm. The catalysed reaction is RNA(n) + a ribonucleoside 5'-triphosphate = RNA(n+1) + diphosphate. Its function is as follows. DNA-dependent RNA polymerase (RNAP) catalyzes the transcription of DNA into RNA using the four ribonucleoside triphosphates as substrates. This subunit is involved in DNA promoter recognition. The protein is DNA-directed RNA polymerase subunit Rpo2 of Saccharolobus shibatae (strain ATCC 51178 / DSM 5389 / JCM 8931 / NBRC 15437 / B12) (Sulfolobus shibatae).